The chain runs to 297 residues: Guanylate kinase (297 aa).

Residues Gly-4 to His-183 enclose the Guanylate kinase-like domain. Gly-11–Gly-18 lines the ATP pocket. Positions Glu-204–Phe-297 are unknown.

Belongs to the guanylate kinase family.

It localises to the cytoplasm. The enzyme catalyses GMP + ATP = GDP + ADP. In terms of biological role, essential for recycling GMP and indirectly, cGMP. This Mycoplasma capricolum subsp. capricolum (strain California kid / ATCC 27343 / NCTC 10154) protein is Guanylate kinase (gmk).